Reading from the N-terminus, the 131-residue chain is UPF0102 protein YraN (131 aa).

The span at 1–19 shows a compositional bias: polar residues; it reads MATVPTRSGSPRQLTTKQT. A disordered region spans residues 1-20; sequence MATVPTRSGSPRQLTTKQTG.

This sequence belongs to the UPF0102 family.

The chain is UPF0102 protein YraN from Escherichia coli O8 (strain IAI1).